The chain runs to 835 residues: Invasin (835 aa).

One can recognise a Big-1 domain in the interval 451-541 (VITSEVTDDG…QQATVDVRFA (91 aa)).

Belongs to the intimin/invasin family.

The protein resides in the cell outer membrane. In terms of biological role, invasin is a protein that allows enteric bacteria to penetrate cultured mammalian cells. The entry of invasin in the cell is mediated by binding several beta-1 chain integrins. In Yersinia enterocolitica, this protein is Invasin.